Here is a 109-residue protein sequence, read N- to C-terminus: Tyrosine-protein phosphatase 6 (109 aa).

The 109-residue stretch at 1–109 (YNINVIVMVC…SEDETTPLCV (109 aa)) folds into the Tyrosine-protein phosphatase domain. Asp-76 contacts substrate.

Belongs to the protein-tyrosine phosphatase family.

The catalysed reaction is O-phospho-L-tyrosyl-[protein] + H2O = L-tyrosyl-[protein] + phosphate. This Styela plicata (Wrinkled sea squirt) protein is Tyrosine-protein phosphatase 6 (STY-6).